A 174-amino-acid chain; its full sequence is uncharacterized protein (174 aa).

Residues 7–24 (LLLLAFAVCLAVGFSGCL) form a helical membrane-spanning segment.

Its subcellular location is the membrane. This is an uncharacterized protein from Methanocaldococcus jannaschii (strain ATCC 43067 / DSM 2661 / JAL-1 / JCM 10045 / NBRC 100440) (Methanococcus jannaschii).